Here is a 254-residue protein sequence, read N- to C-terminus: Ribosomal RNA small subunit methyltransferase A (254 aa).

S-adenosyl-L-methionine is bound by residues Asn-12, Leu-14, Gly-38, Glu-59, Asp-83, and Asn-100.

The protein belongs to the class I-like SAM-binding methyltransferase superfamily. rRNA adenine N(6)-methyltransferase family. RsmA subfamily.

The protein resides in the cytoplasm. The catalysed reaction is adenosine(1518)/adenosine(1519) in 16S rRNA + 4 S-adenosyl-L-methionine = N(6)-dimethyladenosine(1518)/N(6)-dimethyladenosine(1519) in 16S rRNA + 4 S-adenosyl-L-homocysteine + 4 H(+). In terms of biological role, specifically dimethylates two adjacent adenosines (A1518 and A1519) in the loop of a conserved hairpin near the 3'-end of 16S rRNA in the 30S particle. May play a critical role in biogenesis of 30S subunits. This chain is Ribosomal RNA small subunit methyltransferase A, found in Mycoplasma mobile (strain ATCC 43663 / 163K / NCTC 11711) (Mesomycoplasma mobile).